Consider the following 212-residue polypeptide: 3-isopropylmalate dehydratase small subunit 1 (212 aa).

It belongs to the LeuD family. LeuD type 1 subfamily. In terms of assembly, heterodimer of LeuC and LeuD.

The enzyme catalyses (2R,3S)-3-isopropylmalate = (2S)-2-isopropylmalate. It functions in the pathway amino-acid biosynthesis; L-leucine biosynthesis; L-leucine from 3-methyl-2-oxobutanoate: step 2/4. Its function is as follows. Catalyzes the isomerization between 2-isopropylmalate and 3-isopropylmalate, via the formation of 2-isopropylmaleate. This chain is 3-isopropylmalate dehydratase small subunit 1, found in Chromobacterium violaceum (strain ATCC 12472 / DSM 30191 / JCM 1249 / CCUG 213 / NBRC 12614 / NCIMB 9131 / NCTC 9757 / MK).